The chain runs to 440 residues: Transposon Ty1-DR1 Gag polyprotein (440 aa).

Composition is skewed to polar residues over residues 1 to 10 (MESQQLSNYP), 48 to 60 (TKANSQQTTTPAS), and 127 to 152 (QSQFPQYPSSVGTPLSTPSPESGNTF). Disordered regions lie at residues 1–93 (MESQ…MMTQ), 126–173 (PQSQ…RPPP), and 352–440 (GSRN…PGTY). Positions 153 to 165 (TDSSSADSDMTST) are enriched in low complexity. Residues 299–401 (NNGIHINNKV…NSKSKTARAH (103 aa)) are RNA-binding. The segment covering 402-418 (NVSTSNNSPSTDNDSIS) has biased composition (low complexity). The residue at position 416 (serine 416) is a Phosphoserine. A compositionally biased stretch (polar residues) spans 419 to 428 (KSTTEPIQLN). Over residues 429–440 (NKHDLHLRPGTY) the composition is skewed to basic and acidic residues.

As to quaternary structure, homotrimer.

The protein resides in the cytoplasm. In terms of biological role, capsid protein (CA) is the structural component of the virus-like particle (VLP), forming the shell that encapsulates the retrotransposons dimeric RNA genome. The particles are assembled from trimer-clustered units and there are holes in the capsid shells that allow for the diffusion of macromolecules. CA also has nucleocapsid-like chaperone activity, promoting primer tRNA(i)-Met annealing to the multipartite primer-binding site (PBS), dimerization of Ty1 RNA and initiation of reverse transcription. The chain is Transposon Ty1-DR1 Gag polyprotein (TY1A-DR1) from Saccharomyces cerevisiae (strain ATCC 204508 / S288c) (Baker's yeast).